A 66-amino-acid polypeptide reads, in one-letter code: Phylloseptin-H8 (66 aa).

A signal peptide spans 1-22; that stretch reads MAFLKKSLFLVLFLGLVSLSIC. A propeptide spanning residues 23–44 is cleaved from the precursor; that stretch reads EEEKRETEEEENDQEEDDKSEE. The segment at 25 to 44 is disordered; that stretch reads EKRETEEEENDQEEDDKSEE. Acidic residues predominate over residues 30–41; that stretch reads EEEENDQEEDDK. At Leu-65 the chain carries Leucine amide.

As to expression, expressed by the skin glands.

It localises to the secreted. Has antimicrobial activity. The polypeptide is Phylloseptin-H8 (Pithecopus hypochondrialis (Orange-legged leaf frog)).